A 727-amino-acid polypeptide reads, in one-letter code: MAADSREEKDGELNVLDDILTEVPEQDDELYNPESEQDKNEKKGSKRKSDRMESTDTKRQKPSVHSRQLVSKPLSSSVSNNKRIVSTKGKSATEYKNEEYQRSERNKRLDADRKIRLSSSASREPYKNQPEKTCVRKRDPERRAKSPTPDGSERIGLEVDRRASRSSQSSKEEVNSEEYGSDHETGSSGSSDEQGNNTENEEEGVEEDVEEDEEVEEDAEEDEEVDEDGEEEEEEEEEEEEEEEEEEEEYEQDERDQKEEGNDYDTRSEASDSGSESVSFTDGSVRSGSGTDGSDEKKKERKRARGISPIVFDRSGSSASESYAGSEKKHEKLSSSVRAVRKDQTSKLKYVLQDARFFLIKSNNHENVSLAKAKGVWSTLPVNEKKLNLAFRSARSVILIFSVRESGKFQGFARLSSESHHGGSPIHWVLPAGMSAKMLGGVFKIDWICRRELPFTKSAHLTNPWNEHKPVKIGRDGQEIELECGTQLCLLFPPDESIDLYQVIHKMRHKRRMHSQPRSRGRPSRREPVRDVGRRRPEDYDIHNSRKKPRIDYPPEFHQRPGYLKDPRYQEVDRRFSGVRRDVFLNGSYNDYVREFHNMGPPPPWQGMPPYPGMEQPPHHPYYQHHAPPPQAHPPYSGHHPVPHEARYRDKRVHDYDMRVDDFLRRTQAVVSGRRSRPRERDRERERDRPRDNRRDRERDRGRDRERERERLCDRDRDRGERGRYRR.

Positions 1 to 12 (MAADSREEKDGE) are enriched in basic and acidic residues. Residues 1–338 (MAADSREEKD…KHEKLSSSVR (338 aa)) are disordered. At Ser35 the chain carries Phosphoserine. The span at 50 to 59 (DRMESTDTKR) shows a compositional bias: basic and acidic residues. A compositionally biased stretch (polar residues) spans 63–90 (SVHSRQLVSKPLSSSVSNNKRIVSTKGK). Residues 91–115 (SATEYKNEEYQRSERNKRLDADRKI) show a composition bias toward basic and acidic residues. Lys96 participates in a covalent cross-link: Glycyl lysine isopeptide (Lys-Gly) (interchain with G-Cter in SUMO2). A phosphoserine mark is found at Ser118 and Ser120. The segment covering 124-144 (EPYKNQPEKTCVRKRDPERRA) has biased composition (basic and acidic residues). Position 146 is a phosphoserine (Ser146). Phosphothreonine is present on Thr148. Composition is skewed to basic and acidic residues over residues 151–163 (GSERIGLEVDRRA) and 170–185 (SKEEVNSEEYGSDHET). Residues 199–254 (ENEEEGVEEDVEEDEEVEEDAEEDEEVDEDGEEEEEEEEEEEEEEEEEEEEYEQDE) show a composition bias toward acidic residues. Positions 255–270 (RDQKEEGNDYDTRSEA) are enriched in basic and acidic residues. Over residues 280–289 (FTDGSVRSGS) the composition is skewed to polar residues. Phosphoserine occurs at positions 308, 315, 317, 318, and 320. Residues 315–325 (SGSSASESYAG) are compositionally biased toward low complexity. The 138-residue stretch at 355–492 (ARFFLIKSNN…ECGTQLCLLF (138 aa)) folds into the YTH domain. RNA-binding positions include 361–363 (KSN) and 377–378 (WS). A Phosphoserine modification is found at Ser424. RNA is bound at residue Trp428. Ser435 is subject to Phosphoserine. Asp476 contacts RNA. Over residues 508-523 (RHKRRMHSQPRSRGRP) the composition is skewed to basic residues. Disordered regions lie at residues 508–564 (RHKR…PGYL), 607–643 (GMPPYPGMEQPPHHPYYQHHAPPPQAHPPYSGHHPVP), and 669–727 (AVVS…RYRR). Residues 524 to 564 (SRREPVRDVGRRRPEDYDIHNSRKKPRIDYPPEFHQRPGYL) show a composition bias toward basic and acidic residues. At Ser545 the chain carries Phosphoserine. Positions 679 to 727 (RERDRERERDRPRDNRRDRERDRGRDRERERERLCDRDRDRGERGRYRR) are enriched in basic and acidic residues.

Interacts with SRSF1. Interacts with SRSF2. Interacts with SRSF3. Interacts with SRSF7. Interacts with SRSF10. Interacts with CPSF6. Interacts with KHDRBS1/SAM68. Interacts with TRA2B. Interacts with KHDRBS3. Interacts with EMD. Interacts with RBMX. Interacts with ZCCHC8. Tyrosine phosphorylated.

The protein localises to the nucleus. It is found in the nucleus speckle. Regulator of alternative splicing that specifically recognizes and binds N6-methyladenosine (m6A)-containing RNAs. M6A is a modification present at internal sites of mRNAs and some non-coding RNAs and plays a role in the efficiency of mRNA splicing, processing and stability. Acts as a key regulator of exon-inclusion or exon-skipping during alternative splicing via interaction with mRNA splicing factors SRSF3 and SRSF10. Specifically binds m6A-containing mRNAs and promotes recruitment of SRSF3 to its mRNA-binding elements adjacent to m6A sites, leading to exon-inclusion during alternative splicing. In contrast, interaction with SRSF3 prevents interaction with SRSF10, a splicing factor that promotes exon skipping: this prevents SRSF10 from binding to its mRNA-binding sites close to m6A-containing regions, leading to inhibit exon skipping during alternative splicing. May also regulate alternative splice site selection. Also involved in nuclear export of m6A-containing mRNAs via interaction with SRSF3: interaction with SRSF3 facilitates m6A-containing mRNA-binding to both SRSF3 and NXF1, promoting mRNA nuclear export. Involved in S-adenosyl-L-methionine homeostasis by regulating expression of MAT2A transcripts, probably by binding m6A-containing MAT2A mRNAs. Also recognizes and binds m6A on other RNA molecules. Involved in random X inactivation mediated by Xist RNA: recognizes and binds m6A-containing Xist and promotes transcription repression activity of Xist. Also recognizes and binds m6A-containing single-stranded DNA. Involved in germline development: required for spermatogonial development in males and oocyte growth and maturation in females, probably via its role in alternative splicing. The protein is YTH domain-containing protein 1 of Homo sapiens (Human).